We begin with the raw amino-acid sequence, 565 residues long: Periplasmic trehalase (565 aa).

A signal peptide spans 1 to 30 (MKSPAPSRPQKMALIPACIFLCFAALSVQA). Substrate is bound by residues arginine 152, 159–160 (WD), asparagine 196, 205–207 (RSQ), 277–279 (RPE), and glycine 310. Catalysis depends on proton donor/acceptor residues aspartate 312 and glutamate 496. Glutamate 511 lines the substrate pocket. Residues 539–565 (CDNVPATRPLSESTTQPVKQKEAEPTP) are disordered.

This sequence belongs to the glycosyl hydrolase 37 family. In terms of assembly, monomer.

The protein localises to the periplasm. The enzyme catalyses alpha,alpha-trehalose + H2O = alpha-D-glucose + beta-D-glucose. Provides the cells with the ability to utilize trehalose at high osmolarity by splitting it into glucose molecules that can subsequently be taken up by the phosphotransferase-mediated uptake system. This Escherichia coli O17:K52:H18 (strain UMN026 / ExPEC) protein is Periplasmic trehalase.